A 336-amino-acid polypeptide reads, in one-letter code: Aspartate--ammonia ligase (336 aa).

It belongs to the class-II aminoacyl-tRNA synthetase family. AsnA subfamily.

The protein resides in the cytoplasm. It catalyses the reaction L-aspartate + NH4(+) + ATP = L-asparagine + AMP + diphosphate + H(+). Its pathway is amino-acid biosynthesis; L-asparagine biosynthesis; L-asparagine from L-aspartate (ammonia route): step 1/1. The protein is Aspartate--ammonia ligase of Ligilactobacillus salivarius (strain UCC118) (Lactobacillus salivarius).